We begin with the raw amino-acid sequence, 529 residues long: Nuclear distribution protein PAC1 (529 aa).

Positions 68–89 form a coiled coil; sequence RLQHKIIDLEGEVSNLRTVIDS. 7 WD repeats span residues 120 to 159, 165 to 218, 221 to 261, 264 to 318, 321 to 395, 416 to 455, and 496 to 529; these read QSHQ…SLIP, AHIR…HIRT, GHEH…CIKT, GHSD…GLSL, GHTH…FRPH, GHQS…VNGR, and TEED…RLWS.

The protein belongs to the WD repeat LIS1/nudF family. As to quaternary structure, self-associates. Interacts with NDL1 and dynein.

It localises to the cytoplasm. Its subcellular location is the cytoskeleton. The protein resides in the spindle pole. Functionally, positively regulates the activity of the minus-end directed microtubule motor protein dynein. Plays a central role in positioning the mitotic spindle at the bud neck during cell division. Targets cytoplasmic dynein to microtubule plus ends, thereby promoting dynein-mediated microtubule sliding along the bud cortex and consequently the movement of the mitotic spindle to the bud neck. The chain is Nuclear distribution protein PAC1 from Debaryomyces hansenii (strain ATCC 36239 / CBS 767 / BCRC 21394 / JCM 1990 / NBRC 0083 / IGC 2968) (Yeast).